Consider the following 418-residue polypeptide: Glutamyl-tRNA(Gln) amidotransferase subunit D (418 aa).

An Asparaginase/glutaminase domain is found at 74–405 (KNISILSTGG…EDAKELMSKD (332 aa)). Catalysis depends on residues Thr84, Thr160, Asp161, and Lys237.

Belongs to the asparaginase 1 family. GatD subfamily. Heterodimer of GatD and GatE.

The catalysed reaction is L-glutamyl-tRNA(Gln) + L-glutamine + ATP + H2O = L-glutaminyl-tRNA(Gln) + L-glutamate + ADP + phosphate + H(+). Allows the formation of correctly charged Gln-tRNA(Gln) through the transamidation of misacylated Glu-tRNA(Gln) in organisms which lack glutaminyl-tRNA synthetase. The reaction takes place in the presence of glutamine and ATP through an activated gamma-phospho-Glu-tRNA(Gln). The GatDE system is specific for glutamate and does not act on aspartate. The chain is Glutamyl-tRNA(Gln) amidotransferase subunit D from Methanococcus maripaludis (strain C7 / ATCC BAA-1331).